Consider the following 377-residue polypeptide: Guanine nucleotide-binding protein subunit alpha-13 (377 aa).

Residues cysteine 14 and cysteine 18 are each lipidated (S-palmitoyl cysteine). The 331-residue stretch at 47–377 folds into the G-alpha domain; the sequence is RLVKILLLGA…HDNLKQLMLQ (331 aa). Positions 50–63 are G1 motif; sequence KILLLGAGESGKST. GTP contacts are provided by residues 58–63, serine 173, and 197–200; these read ESGKST and LLAR. Serine 62 is a binding site for Mg(2+). Residues 195–203 form a G2 motif region; it reads DILLARRPT. Threonine 203 contacts Mg(2+). Threonine 203 is modified (phosphothreonine). The tract at residues 218–227 is G3 motif; that stretch reads FKMVDVGGQR. The segment at 287-294 is G4 motif; sequence ILFLNKTD. GTP-binding positions include 291 to 294 and alanine 349; that span reads NKTD. Residues 347-352 form a G5 motif region; the sequence is TTAINT.

Belongs to the G-alpha family. G(12) subfamily. In terms of assembly, g proteins are composed of 3 units; alpha, beta and gamma. The alpha chain contains the guanine nucleotide binding site. Interacts with UBXD5. Interacts with HAX1. Interacts (in GTP-bound form) with PPP5C (via TPR repeats); activates PPP5C phosphatase activity and translocates PPP5C to the cell membrane. Interacts with RGS22. Interacts (in GTP-bound form) with ARHGEF1. Interacts (in GTP-bound form) with ARHGEF11 (via RGS domain). Interacts (in GTP-bound form) with ARHGEF12 (via RGS domain). Interacts with CTNND1. Interacts with GAS2L2. Interacts with GPR35. Interacts with GPR174. Phosphorylation on Thr-203 destabilizes the heterotrimer of alpha, beta and gamma, and inhibits Rho activation. Expressed in brain and testis, as well as in kidney and sperm (at protein level).

The protein localises to the membrane. It localises to the melanosome. Its subcellular location is the cytoplasm. It is found in the nucleus. Functionally, guanine nucleotide-binding proteins (G proteins) are involved as modulators or transducers in various transmembrane signaling systems. Activates effector molecule RhoA by binding and activating RhoGEFs (ARHGEF1/p115RhoGEF, ARHGEF11/PDZ-RhoGEF and ARHGEF12/LARG). GNA13-dependent Rho signaling subsequently regulates transcription factor AP-1 (activating protein-1). Promotes tumor cell invasion and metastasis by activating Rho/ROCK signaling pathway. Inhibits CDH1-mediated cell adhesion in a process independent from Rho activation. In lymphoid follicles, transmits P2RY8- and S1PR2-dependent signals that lead to inhibition of germinal center (GC) B cell growth and migration outside the GC niche. In Mus musculus (Mouse), this protein is Guanine nucleotide-binding protein subunit alpha-13 (Gna13).